A 217-amino-acid chain; its full sequence is Ufm1-specific protease 1 (217 aa).

Active-site residues include C53, D175, and H177.

This sequence belongs to the peptidase C78 family. As to expression, widely expressed. Expressed at higher level in brain, heart, kidney and skeletal muscle.

The protein localises to the cytoplasm. It localises to the cytosol. Thiol-dependent isopeptidase that specifically mediate the processing of UFM1 precursors as well as the deconjugation of UFM1 from target proteins. Mainly responsible for the maturation of the UFM1 precursor, a prerequisite for conjugation reactions. In Mus musculus (Mouse), this protein is Ufm1-specific protease 1.